The sequence spans 574 residues: FAD-linked oxidoreductase penH (574 aa).

The signal sequence occupies residues 1-25 (MLPRALTLSALLALLLAIYLALAPA). N48, N107, N193, N368, and N385 each carry an N-linked (GlcNAc...) asparagine glycan. The FAD-binding PCMH-type domain maps to 121–305 (HQGRIPLYAA…VRVTMRTYPD (185 aa)).

It belongs to the oxygen-dependent FAD-linked oxidoreductase family. The cofactor is FAD.

The enzyme catalyses peniprequinolone + A = yaequinolone E + AH2. It functions in the pathway secondary metabolite biosynthesis. The protein operates within alkaloid biosynthesis. It participates in mycotoxin biosynthesis. Its function is as follows. FAD-linked oxidoreductase; part of the gene cluster that mediates the biosynthesis of penigequinolones, potent insecticidal alkaloids that contain a highly modified 10-carbon prenyl group. The first stage is catalyzed by the nonribosomal peptide synthetase penN that condenses anthranilic acid and O-methyl-L-tyrosine to produce 4'-methoxycyclopeptin. 4'-methoxycyclopeptin is then converted to 4'-methoxydehydrocyclopeptin by the ketoglutarate-dependent dioxygenase penM through dehydrogenation to form a double bond between C-alpha and C-beta of the O-methyltyrosine side chain. PenM also converts its first product methoxydehydrocyclopeptin to 4'-methoxycyclopenin. The following conversion of 4'methoxycyclopenin into 4'-methoxyviridicatin is catalyzed by the cyclopenase penL. 4'-methoxyviridicatin is the precursor of quinolone natural products, and is further converted to quinolinone B. The prenyltransferase penI then catalyzes the canonical Friedel-Crafts alkylation of quinolinone B with dimethylallyl cation to yield dimethylallyl quinolone, which is subjected to FAD-dependent dehydrogenation by the FAD-linked oxidoreductase penH to yield conjugated aryl diene. The delta(3') double bond then serves as the site of the second alkylation with DMAPP catalyzed by the prenyltransferase penG to yield a carbenium ion intermediate, which can be attacked by H(2)O to yield a styrenyl quinolone containing a C3'-hydroxyprenyl chain, or undergo cyclization to yield yaequinolones J1 and J2. The conversion of the styrenyl quinolone into the tetrahydrofuran-containing yaequinolone C is performed by the FAD-dependent monooxygenase penE and involves epoxidation of the terminal C7'-C8' olefin, followed by epoxide ring opening initiated by the C3' hydroxyl group. The predicted cysteine hydrolase penJ acts as an epoxide hydrolase that enhances the rate of the 5-exo-tet cyclization step, increasing the yield of yaequinolone C. PenF catalyzes the cationic rearrangement of the epoxide formed by penE (before ring opening to produce yaequinolone C) into yaequinolone D. Finally, the short-chain dehydrogenase/reductase (SDR)-like reductase penD, catalyzes both the dehydration of yaequinolone D and the reduction of the resulting oxonium to yield penigequinolone. The polypeptide is FAD-linked oxidoreductase penH (Penicillium thymicola).